A 150-amino-acid chain; its full sequence is Putative esterase SSO1253 (150 aa).

The protein belongs to the thioesterase PaaI family.

The protein is Putative esterase SSO1253 of Saccharolobus solfataricus (strain ATCC 35092 / DSM 1617 / JCM 11322 / P2) (Sulfolobus solfataricus).